We begin with the raw amino-acid sequence, 569 residues long: Atlastin-2 (569 aa).

The interval 1 to 49 is N-terminal hypervariable region (HVR); sequence MAEGGSLRNRTRFGSRSNEAMNHVDYPDENFVEEIQLNSDTEVMEKPRP. The Cytoplasmic segment spans residues 1 to 464; that stretch reads MAEGGSLRNR…NIFYAARTPA (464 aa). Residues 80-324 enclose the GB1/RHD3-type G domain; the sequence is DLNVVVLSVA…LVPLLLAPEN (245 aa). GDP is bound by residues Arg93, Lys94, Gly95, Lys96, Ser97, Phe98, Gln163, Arg232, and Asp233. Residues Arg93, Lys94, Gly95, Lys96, Ser97, and Phe98 each contribute to the GTP site. Position 97 (Ser97) interacts with Mg(2+). Residues Arg232 and Asp233 each coordinate GTP. Positions 244 to 272 form a coiled coil; that stretch reads LEGGNKFLEKRLQVKQNQHEELQNVRKHI. GDP-binding residues include Val291 and Asn294. Val291 lines the GTP pocket. A 3HB (three-helix bundle) domain region spans residues 362–453; the sequence is MLQATAEANN…YANFLKHNDG (92 aa). The tract at residues 454–462 is linker; the sequence is KNIFYAART. A helical transmembrane segment spans residues 465 to 485; it reads TLFAVMFAMYIISGLTGFIGM. Residues 486–487 are Lumenal-facing; that stretch reads NS. Residues 488 to 508 traverse the membrane as a helical segment; the sequence is IATICNLIMGLTLLSFCTWAY. The Cytoplasmic segment spans residues 509-569; the sequence is VKYSGEFREL…DQVSGRLKTN (61 aa). The tract at residues 535-569 is autoinhibitory domain; sequence KPLSDNLMEDNIRQTVRNSIKAGLTDQVSGRLKTN.

The protein belongs to the TRAFAC class dynamin-like GTPase superfamily. GB1/RHD3 GTPase family. GB1 subfamily. In terms of assembly, monomeric and homodimeric. The homodimer, transiently formed by two molecules on opposing membranes, is the active form mediating ER membrane fusion.

The protein localises to the endoplasmic reticulum membrane. It carries out the reaction GTP + H2O = GDP + phosphate + H(+). Atlastin-2 (ATL2) is a membrane-anchored GTPase that mediates the GTP-dependent fusion of endoplasmic reticulum (ER) membranes, maintaining the continuous ER network. It facilitates the formation of three-way junctions where ER tubules intersect. Two atlastin-2 on neighboring ER tubules bind GTP and form loose homodimers through the GB1/RHD3-type G domains and 3HB regions. Upon GTP hydrolysis, the 3HB regions tighten, pulling the membranes together to drive their fusion. After fusion, the homodimer disassembles upon release of inorganic phosphate (Pi). Subsequently, GDP dissociates, resetting the monomers to a conformation ready for a new fusion cycle. The chain is Atlastin-2 (atl2) from Xenopus laevis (African clawed frog).